The sequence spans 206 residues: Small ribosomal subunit protein uS4 (206 aa).

The region spanning 96–156 (TRLDNVVYRM…EKSRTQARIK (61 aa)) is the S4 RNA-binding domain.

Belongs to the universal ribosomal protein uS4 family. In terms of assembly, part of the 30S ribosomal subunit. Contacts protein S5. The interaction surface between S4 and S5 is involved in control of translational fidelity.

One of the primary rRNA binding proteins, it binds directly to 16S rRNA where it nucleates assembly of the body of the 30S subunit. Functionally, with S5 and S12 plays an important role in translational accuracy. The sequence is that of Small ribosomal subunit protein uS4 from Shewanella baltica (strain OS223).